Consider the following 196-residue polypeptide: HTH-type transcriptional regulator Hpr (196 aa).

In terms of domain architecture, HTH marR-type spans 13 to 157 (SIVFSHKMAL…LICIVRHIYG (145 aa)). Positions 63 to 86 (ISDIASHGVMHVSTAFNFSKKLEA) form a DNA-binding region, H-T-H motif.

As to quaternary structure, homodimer.

In terms of biological role, negative regulator of protease production and sporulation. The polypeptide is HTH-type transcriptional regulator Hpr (Shouchella clausii (strain KSM-K16) (Alkalihalobacillus clausii)).